The primary structure comprises 499 residues: Probable malate:quinone oxidoreductase (499 aa).

The protein belongs to the MQO family. Requires FAD as cofactor.

It catalyses the reaction (S)-malate + a quinone = a quinol + oxaloacetate. Its pathway is carbohydrate metabolism; tricarboxylic acid cycle; oxaloacetate from (S)-malate (quinone route): step 1/1. This chain is Probable malate:quinone oxidoreductase, found in Exiguobacterium sp. (strain ATCC BAA-1283 / AT1b).